Reading from the N-terminus, the 480-residue chain is Putative auxin transporter-like protein 4 (480 aa).

Residues 1 to 66 are Cytoplasmic-facing; sequence MASEKVETIV…DAWFSCASNQ (66 aa). The helical transmembrane segment at 67–84 threads the bilayer; sequence VAQVLLTLPYSFSQLGMA. The Extracellular segment spans residues 85–86; sequence SG. A helical membrane pass occupies residues 87–107; that stretch reads VAFQVFYGLMGSWTAYLISVL. The Cytoplasmic portion of the chain corresponds to 108–143; it reads YVEYRTRRERDKVDFRNHVIQWFEVLDGLLGRHWRN. Residues 144–164 form a helical membrane-spanning segment; that stretch reads AGLLFNCTFLLFGSVIQLIAC. Residues 165–179 lie on the Extracellular side of the membrane; that stretch reads ASNIYYINDRLDKRT. Residues 180–200 traverse the membrane as a helical segment; that stretch reads WTYIFGACCATTVFVPSFHNY. Residues 201-203 are Cytoplasmic-facing; that stretch reads RVW. Residues 204 to 224 traverse the membrane as a helical segment; it reads SFLGLLMTSYTAWYLTVAAVV. Residues 225-241 are Extracellular-facing; it reads HGKVDGAAPRAGPSKTM. A helical transmembrane segment spans residues 242–262; it reads VLYFTGATNILYTFGGHAVTV. Residues 263-275 lie on the Cytoplasmic side of the membrane; that stretch reads EIMHAMWRPRRFK. Residues 276 to 296 traverse the membrane as a helical segment; it reads MIYLAATAYVLTLTLPSAAAM. Residues 297–323 lie on the Extracellular side of the membrane; that stretch reads YWAFGDALLDHSNAFALLPRTPWRDAA. Residues 324–344 form a helical membrane-spanning segment; that stretch reads VVLMLIHQFITFGFACTPLYF. Topologically, residues 345-365 are cytoplasmic; that stretch reads VWEKAIGVHGGAGVLRRAAAR. Residues 366 to 386 form a helical membrane-spanning segment; it reads LPVVLPIWFLAVIFPFFGPIN. A topological domain (extracellular) is located at residue Ser-387. The helical transmembrane segment at 388 to 408 threads the bilayer; the sequence is TVGSFLVSFTVYIIPAMAHMA. Over 409–433 the chain is Cytoplasmic; that stretch reads TFAPAAARENAVEPPPRALGGWPGT. A helical transmembrane segment spans residues 434–454; sequence FAANCFVVAWVLVVGFGFGGW. The Extracellular segment spans residues 455-480; that stretch reads ASTVNFVRQVDTFGLFTKCYQCPPRH.

The protein belongs to the amino acid/polyamine transporter 2 family. Amino acid/auxin permease (AAAP) (TC 2.A.18.1) subfamily.

Its subcellular location is the cell membrane. Its function is as follows. Carrier protein involved in proton-driven auxin influx. May mediate the formation of auxin gradient from developing leaves (site of auxin biosynthesis) to tips. The polypeptide is Putative auxin transporter-like protein 4 (Oryza sativa subsp. japonica (Rice)).